Consider the following 753-residue polypeptide: Transcription factor SOX-30 (753 aa).

Disordered regions lie at residues 1–45 (MERA…TLSA) and 140–161 (QELGPGLDPSVGPRGGVETGPR). Residues 7–22 (EPQPQQRPLRPAPPLL) show a composition bias toward pro residues. The segment at residues 337–405 (VKRPMNAFMV…KHREEFPGWV (69 aa)) is a DNA-binding region (HMG box). 2 disordered regions span residues 514 to 540 (AGPSQTDTHQLHSEGTHTVKQPTPVSL) and 726 to 753 (PTSTPSSIQQVNVTDSDEEEEEKVLRDL). 2 stretches are compositionally biased toward polar residues: residues 531 to 540 (TVKQPTPVSL) and 726 to 739 (PTSTPSSIQQVNVT).

In terms of assembly, interacts with CTNNB1, competitively inhibiting CTNNB1-TCF7L2/TCF4 interaction.

The protein resides in the nucleus. It localises to the cytoplasm. Its function is as follows. Acts both as a transcriptional activator and a repressor. Binds to the DNA sequence 5'-ACAAT-3' and shows a preference for guanine residues surrounding this core motif. Binds to its own promoter and activates its own transcription. Required to activate the expression of postmeiotic genes involved in spermiogenesis. Binds to the promoter region of CTNNB1 and represses its transcription which leads to inhibition of Wnt signaling. Also inhibits Wnt signaling by binding to the CTNNB1 protein, preventing interaction of CTNNB1 with TCF7L2/TCF4. The protein is Transcription factor SOX-30 (SOX30) of Macaca fascicularis (Crab-eating macaque).